The sequence spans 709 residues: Solute carrier family 15 member 1 (709 aa).

A helical transmembrane segment spans residues 1–21 (MGMSKSRGCFGYPLSIFFIVV). Residues 22–53 (NEFCERFSYYGMRALLVLYFRNFLGWDDNLST) are Extracellular-facing. A glycan (N-linked (GlcNAc...) asparagine) is linked at asparagine 50. Residues 54-74 (AIYHTFVALCYLTPILGALIA) traverse the membrane as a helical segment. The Cytoplasmic segment spans residues 75–82 (DSWLGKFK). A helical membrane pass occupies residues 83-103 (TIVSLSIVYTIGQAVISVSSI). Over 104–118 (NDLTDHDHNGSPDSL) the chain is Extracellular. A helical membrane pass occupies residues 119–139 (PVHVALSMVGLALIALGTGGI). Residues 140 to 161 (KPCVSAFGGDQFEEGQEKQRNR) are Cytoplasmic-facing. The chain crosses the membrane as a helical span at residues 162 to 182 (FFSIFYLAINGGSLLSTIITP). At 183–198 (ILRVQQCGIHSQQACY) the chain is on the extracellular side. The helical transmembrane segment at 199–219 (PLAFGVPAALMAVALIVFVLG) threads the bilayer. Over 220–276 (SGMYKKFQPQGNIMGKVAKCIGFAIKNRFRHRSKAYPKREHWLDWAKEKYDERLISQ) the chain is Cytoplasmic. A helical membrane pass occupies residues 277-297 (IKMVTKVMFLYIPLPMFWALF). Topologically, residues 298 to 327 (DQQGSRWTLQATTMNGKIGAIEIQPDQMQT) are extracellular. The helical transmembrane segment at 328–348 (VNAILIVIMVPIVDAVVYPLI) threads the bilayer. Residues 349 to 361 (AKCGFNFTSLKKM) are Cytoplasmic-facing. A helical membrane pass occupies residues 362 to 382 (TVGMFLASMAFVVAAIVQVEI). Residues 383–585 (DKTLPVFPGG…PPNTVNMALQ (203 aa)) lie on the Extracellular side of the membrane. Residues 383-585 (DKTLPVFPGG…PPNTVNMALQ (203 aa)) form an extracellular domain (ECD) region. N-linked (GlcNAc...) asparagine glycans are attached at residues asparagine 406, asparagine 439, asparagine 515, and asparagine 532. The helical transmembrane segment at 586–606 (IPQYFLLTCGEVVFSVTGLEF) threads the bilayer. The Cytoplasmic segment spans residues 607 to 620 (SYSQAPSNMKSVLQ). Residues 621–641 (AGWLLTVAVGNIIVLIVAGAG) traverse the membrane as a helical segment. The Extracellular segment spans residues 642 to 646 (HFPKQ). A helical transmembrane segment spans residues 647–667 (WAEYILFASLLLVVCVIFAIM). Topologically, residues 668 to 709 (ARFYTYINPAEIEAQFDEDEKKKGIGKENPYSSLEPVSQTNM) are cytoplasmic. The segment at 690-709 (KGIGKENPYSSLEPVSQTNM) is disordered. Residues 697-709 (PYSSLEPVSQTNM) are compositionally biased toward polar residues.

The protein belongs to the major facilitator superfamily. Proton-dependent oligopeptide transporter (POT/PTR) (TC 2.A.17) family. In terms of assembly, interacts (via extracellular domain region) with trypsin.

The protein localises to the apical cell membrane. It carries out the reaction a dipeptide(out) + H(+)(out) = a dipeptide(in) + H(+)(in). The catalysed reaction is an L-amino acid tripeptide(out) + H(+)(out) = an L-amino acid tripeptide(in) + H(+)(in). It catalyses the reaction L-alanyl-L-lysine(out) + H(+)(out) = L-alanyl-L-lysine(in) + H(+)(in). The enzyme catalyses L-alanyl-L-proline(out) + H(+)(out) = L-alanyl-L-proline(in) + H(+)(in). It carries out the reaction L-alanyl-L-valine(out) + H(+)(out) = L-alanyl-L-valine(in) + H(+)(in). The catalysed reaction is carnosine(out) + H(+)(out) = carnosine(in) + H(+)(in). It catalyses the reaction glycyl-L-glutamine(out) + H(+)(out) = glycyl-L-glutamine(in) + H(+)(in). The enzyme catalyses glycyl-L-leucine(out) + H(+)(out) = glycyl-L-leucine(in) + H(+)(in). It carries out the reaction glycyl-L-proline(out) + H(+)(out) = glycyl-L-proline(in) + H(+)(in). The catalysed reaction is glycyl-sarcosine(out) + H(+)(out) = glycyl-sarcosine(in) + H(+)(in). It catalyses the reaction L-leucyl-L-leucine(out) + H(+)(out) = L-leucyl-L-leucine(in) + H(+)(in). The enzyme catalyses L-leucyl-L-proline(out) + H(+)(out) = L-leucyl-L-proline(in) + H(+)(in). It carries out the reaction L-phenylalanyl-L-leucine(out) + H(+)(out) = L-phenylalanyl-L-leucine(in) + H(+)(in). The catalysed reaction is L-phenylalanyl-L-phenylalanine(out) + H(+)(out) = L-phenylalanyl-L-phenylalanine(in) + H(+)(in). It catalyses the reaction L-lysyl-glycine(out) + H(+)(out) = L-lysyl-glycine(in) + H(+)(in). The enzyme catalyses L-tyrosylglycine(out) + H(+)(out) = L-tyrosylglycine(in) + H(+)(in). It carries out the reaction L-alanyl-L-aspartate(out) + 2 H(+)(out) = L-alanyl-L-aspartate(in) + 2 H(+)(in). The catalysed reaction is L-aspartyl-glycine(out) + 2 H(+)(out) = L-aspartyl-glycine(in) + 2 H(+)(in). It catalyses the reaction glycyl-L-aspartate(out) + 2 H(+)(out) = glycyl-L-aspartate(in) + 2 H(+)(in). The enzyme catalyses glycyl-L-glutamate(out) + 2 H(+)(out) = glycyl-L-glutamate(in) + 2 H(+)(in). It carries out the reaction L-alanyl-L-leucyl-L-alanine(out) + H(+)(out) = L-alanyl-L-leucyl-L-alanine(in) + H(+)(in). The catalysed reaction is L-alanyl-L-prolylglycine(out) + H(+)(out) = L-alanyl-L-prolylglycine(in) + H(+)(in). It catalyses the reaction glycylglycyl-L-isoleucine(out) + H(+)(out) = glycylglycyl-L-isoleucine(in) + H(+)(in). The enzyme catalyses glycylglycyl-L-proline(out) + H(+)(out) = glycylglycyl-L-proline(in) + H(+)(in). It carries out the reaction L-methionyl-L-phenylalanyl-L-methionine(out) + H(+)(out) = L-methionyl-L-phenylalanyl-L-methionine(in) + H(+)(in). The catalysed reaction is N-acetyl-D-muramoyl-L-alanyl-D-isoglutamine(out) + 2 H(+)(out) = N-acetyl-D-muramoyl-L-alanyl-D-isoglutamine(in) + 2 H(+)(in). It catalyses the reaction N(alpha)-formyl-L-methionyl-L-leucyl-L-phenylalanine(out) + 2 H(+)(out) = N(alpha)-formyl-L-methionyl-L-leucyl-L-phenylalanine(in) + 2 H(+)(in). In terms of biological role, electrogenic proton-coupled amino-acid transporter that transports oligopeptides of 2 to 4 amino acids with a preference for dipeptides. Transports neutral and monovalently charged peptides with a proton to peptide stoichiometry of 1:1 or 2:1. Primarily responsible for the absorption of dietary di- and tripeptides from the small intestinal lumen. Mediates transepithelial transport of muramyl and N-formylated bacterial dipeptides contributing to recognition of pathogenic bacteria by the mucosal immune system. The chain is Solute carrier family 15 member 1 from Mus musculus (Mouse).